The sequence spans 845 residues: Translation initiation factor IF-2 (845 aa).

2 disordered regions span residues Lys-44–Ser-91 and Ala-119–Pro-256. Over residues Ala-119–Leu-129 the composition is skewed to basic and acidic residues. The segment covering Asp-139 to Pro-148 has biased composition (acidic residues). The span at Ser-156 to Glu-165 shows a compositional bias: polar residues. Composition is skewed to basic and acidic residues over residues Ile-179–Ser-194 and Ser-202–Arg-217. The region spanning Leu-343–Asp-510 is the tr-type G domain. The G1 stretch occupies residues Gly-352 to Thr-359. Gly-352–Thr-359 is a GTP binding site. The segment at Gly-377–His-381 is G2. A G3 region spans residues Asp-398 to Gly-401. GTP contacts are provided by residues Asp-398–His-402 and Asn-452–Asp-455. A G4 region spans residues Asn-452–Asp-455. Residues Ser-488–Lys-490 are G5.

The protein belongs to the TRAFAC class translation factor GTPase superfamily. Classic translation factor GTPase family. IF-2 subfamily.

The protein resides in the cytoplasm. One of the essential components for the initiation of protein synthesis. Protects formylmethionyl-tRNA from spontaneous hydrolysis and promotes its binding to the 30S ribosomal subunits. Also involved in the hydrolysis of GTP during the formation of the 70S ribosomal complex. This is Translation initiation factor IF-2 from Bartonella henselae (strain ATCC 49882 / DSM 28221 / CCUG 30454 / Houston 1) (Rochalimaea henselae).